Consider the following 193-residue polypeptide: Crossover junction endodeoxyribonuclease RuvC (193 aa).

Active-site residues include D7, E68, and D141. Mg(2+)-binding residues include D7, E68, and D141.

Belongs to the RuvC family. As to quaternary structure, homodimer which binds Holliday junction (HJ) DNA. The HJ becomes 2-fold symmetrical on binding to RuvC with unstacked arms; it has a different conformation from HJ DNA in complex with RuvA. In the full resolvosome a probable DNA-RuvA(4)-RuvB(12)-RuvC(2) complex forms which resolves the HJ. It depends on Mg(2+) as a cofactor.

It is found in the cytoplasm. The catalysed reaction is Endonucleolytic cleavage at a junction such as a reciprocal single-stranded crossover between two homologous DNA duplexes (Holliday junction).. In terms of biological role, the RuvA-RuvB-RuvC complex processes Holliday junction (HJ) DNA during genetic recombination and DNA repair. Endonuclease that resolves HJ intermediates. Cleaves cruciform DNA by making single-stranded nicks across the HJ at symmetrical positions within the homologous arms, yielding a 5'-phosphate and a 3'-hydroxyl group; requires a central core of homology in the junction. The consensus cleavage sequence is 5'-(A/T)TT(C/G)-3'. Cleavage occurs on the 3'-side of the TT dinucleotide at the point of strand exchange. HJ branch migration catalyzed by RuvA-RuvB allows RuvC to scan DNA until it finds its consensus sequence, where it cleaves and resolves the cruciform DNA. The sequence is that of Crossover junction endodeoxyribonuclease RuvC from Bifidobacterium adolescentis (strain ATCC 15703 / DSM 20083 / NCTC 11814 / E194a).